The chain runs to 207 residues: High frequency lysogenization protein HflD homolog (207 aa).

Belongs to the HflD family.

The protein resides in the cytoplasm. Its subcellular location is the cell inner membrane. This Cellvibrio japonicus (strain Ueda107) (Pseudomonas fluorescens subsp. cellulosa) protein is High frequency lysogenization protein HflD homolog.